Here is a 467-residue protein sequence, read N- to C-terminus: tRNA modification GTPase MnmE (467 aa).

(6S)-5-formyl-5,6,7,8-tetrahydrofolate is bound by residues Arg-25, Glu-87, and Lys-130. Positions 226–389 (GLSVVLAGQP…LRGELLRIAG (164 aa)) constitute a TrmE-type G domain. Residue Asn-236 participates in K(+) binding. GTP is bound by residues 236 to 241 (NVGKSS), 255 to 261 (TPIAGTT), and 280 to 283 (DTAG). A Mg(2+)-binding site is contributed by Ser-240. Residues Thr-255, Ile-257, and Thr-260 each coordinate K(+). Thr-261 contributes to the Mg(2+) binding site. Lys-467 lines the (6S)-5-formyl-5,6,7,8-tetrahydrofolate pocket.

Belongs to the TRAFAC class TrmE-Era-EngA-EngB-Septin-like GTPase superfamily. TrmE GTPase family. As to quaternary structure, homodimer. Heterotetramer of two MnmE and two MnmG subunits. The cofactor is K(+).

It is found in the cytoplasm. Exhibits a very high intrinsic GTPase hydrolysis rate. Involved in the addition of a carboxymethylaminomethyl (cmnm) group at the wobble position (U34) of certain tRNAs, forming tRNA-cmnm(5)s(2)U34. This chain is tRNA modification GTPase MnmE, found in Burkholderia mallei (strain NCTC 10247).